We begin with the raw amino-acid sequence, 325 residues long: Lactonase drp35 (325 aa).

Ca(2+)-binding residues include glutamate 46, serine 108, glycine 110, glutamate 128, threonine 131, tyrosine 133, aspartate 136, asparagine 183, aspartate 234, and serine 235. Aspartate 234 (proton donor) is an active-site residue.

Belongs to the SMP-30/CGR1 family. Ca(2+) is required as a cofactor.

The protein resides in the cytoplasm. Its function is as follows. Exhibits lactonase activity. Acts in cells with perturbed membrane integrity and is possibly related to the membrane homeostasis. The chain is Lactonase drp35 (drp35) from Staphylococcus haemolyticus (strain JCSC1435).